Here is a 476-residue protein sequence, read N- to C-terminus: MDNLAAIILAAGKGTRMKSGIVKVMHPLAGAPMVAWPVAVARQAGAGRIVAVVGHQAERLREHFSNDADITLAVQEEQLGTGHAVACAAGDLSGFSGKVLILCGDVPLIRTETLRAMVTAHEATGAVLTVLTARQENPHGYGRIIRGFDGRVIRIVEEKDATPDERSRTEVNAGIYCAEASFLFDAVKRIGNDNAQGEYYLTDIITMANDRGLRCTAHPVADPVEVMGINDRVQLAEAARHARRRIAEEHMLNGVTLVDPAATYIDQGVVIGADTTIQPGVQIAGGCRVGEGCTIEAGAIIKGSELGDRCVVESRAVIRGCRLGSDVVIKAGTVMEDSTVMDHAAIGPMAHLRPGSELGAHVKIGNFVETKKIVMGEGSKASHLTYLGDATIGRNVNVGCGTITCNYDGVNKHRTVIGDDVFVGSDVQFVAPVTIGSNTLIAAGTTVTRDVPADSLAIARTPQINKEGWKLRKRDQ.

The tract at residues 1 to 232 is pyrophosphorylase; that stretch reads MDNLAAIILA…PVEVMGINDR (232 aa). UDP-N-acetyl-alpha-D-glucosamine contacts are provided by residues 9–12, Lys-23, Gln-75, and 80–81; these read LAAG and GT. Mg(2+) is bound at residue Asp-105. Positions 142, 157, 172, and 230 each coordinate UDP-N-acetyl-alpha-D-glucosamine. Position 230 (Asn-230) interacts with Mg(2+). Residues 233–253 are linker; the sequence is VQLAEAARHARRRIAEEHMLN. Residues 254 to 476 are N-acetyltransferase; that stretch reads GVTLVDPAAT…EGWKLRKRDQ (223 aa). Residues Arg-353 and Lys-371 each coordinate UDP-N-acetyl-alpha-D-glucosamine. His-383 acts as the Proton acceptor in catalysis. UDP-N-acetyl-alpha-D-glucosamine is bound by residues Tyr-386 and Asn-397. Acetyl-CoA is bound by residues 406 to 407, Ser-425, Ala-443, and Arg-460; that span reads NY.

The protein in the N-terminal section; belongs to the N-acetylglucosamine-1-phosphate uridyltransferase family. This sequence in the C-terminal section; belongs to the transferase hexapeptide repeat family. As to quaternary structure, homotrimer. Mg(2+) serves as cofactor.

The protein resides in the cytoplasm. It carries out the reaction alpha-D-glucosamine 1-phosphate + acetyl-CoA = N-acetyl-alpha-D-glucosamine 1-phosphate + CoA + H(+). The catalysed reaction is N-acetyl-alpha-D-glucosamine 1-phosphate + UTP + H(+) = UDP-N-acetyl-alpha-D-glucosamine + diphosphate. It participates in nucleotide-sugar biosynthesis; UDP-N-acetyl-alpha-D-glucosamine biosynthesis; N-acetyl-alpha-D-glucosamine 1-phosphate from alpha-D-glucosamine 6-phosphate (route II): step 2/2. It functions in the pathway nucleotide-sugar biosynthesis; UDP-N-acetyl-alpha-D-glucosamine biosynthesis; UDP-N-acetyl-alpha-D-glucosamine from N-acetyl-alpha-D-glucosamine 1-phosphate: step 1/1. The protein operates within bacterial outer membrane biogenesis; LPS lipid A biosynthesis. Its function is as follows. Catalyzes the last two sequential reactions in the de novo biosynthetic pathway for UDP-N-acetylglucosamine (UDP-GlcNAc). The C-terminal domain catalyzes the transfer of acetyl group from acetyl coenzyme A to glucosamine-1-phosphate (GlcN-1-P) to produce N-acetylglucosamine-1-phosphate (GlcNAc-1-P), which is converted into UDP-GlcNAc by the transfer of uridine 5-monophosphate (from uridine 5-triphosphate), a reaction catalyzed by the N-terminal domain. This chain is Bifunctional protein GlmU, found in Geobacter sulfurreducens (strain ATCC 51573 / DSM 12127 / PCA).